Here is a 32-residue protein sequence, read N- to C-terminus: Photosystem II reaction center protein T (32 aa).

Residues 3–23 traverse the membrane as a helical segment; it reads AITYTFILFLTLGLLFFAVAF.

The protein belongs to the PsbT family. As to quaternary structure, PSII is composed of 1 copy each of membrane proteins PsbA, PsbB, PsbC, PsbD, PsbE, PsbF, PsbH, PsbI, PsbJ, PsbK, PsbL, PsbM, PsbT, PsbX, PsbY, PsbZ, Psb30/Ycf12, peripheral proteins PsbO, CyanoQ (PsbQ), PsbU, PsbV and a large number of cofactors. It forms dimeric complexes.

Its subcellular location is the cellular thylakoid membrane. Found at the monomer-monomer interface of the photosystem II (PS II) dimer, plays a role in assembly and dimerization of PSII. PSII is a light-driven water plastoquinone oxidoreductase, using light energy to abstract electrons from H(2)O, generating a proton gradient subsequently used for ATP formation. This chain is Photosystem II reaction center protein T, found in Synechococcus sp. (strain JA-2-3B'a(2-13)) (Cyanobacteria bacterium Yellowstone B-Prime).